We begin with the raw amino-acid sequence, 349 residues long: Isopentenyl-diphosphate delta-isomerase (349 aa).

Position 6-7 (6-7 (RK)) interacts with substrate. FMN is bound by residues 62 to 64 (AMT), Ser93, and Asn122. Substrate is bound at residue Gln152. Position 153 (Glu153) interacts with Mg(2+). Residues Lys184, Thr214, 258-259 (GG), and 280-281 (AG) contribute to the FMN site.

This sequence belongs to the IPP isomerase type 2 family. As to quaternary structure, homooctamer. Dimer of tetramers. It depends on FMN as a cofactor. NADPH serves as cofactor. The cofactor is Mg(2+).

It is found in the cytoplasm. It catalyses the reaction isopentenyl diphosphate = dimethylallyl diphosphate. Involved in the biosynthesis of isoprenoids. Catalyzes the 1,3-allylic rearrangement of the homoallylic substrate isopentenyl (IPP) to its allylic isomer, dimethylallyl diphosphate (DMAPP). The sequence is that of Isopentenyl-diphosphate delta-isomerase from Bacillus cereus (strain ATCC 14579 / DSM 31 / CCUG 7414 / JCM 2152 / NBRC 15305 / NCIMB 9373 / NCTC 2599 / NRRL B-3711).